A 701-amino-acid polypeptide reads, in one-letter code: L-glutamate oxidase precursor (701 aa).

A signal peptide spans 1 to 14 (MTTDTARRHTGAER). FAD contacts are provided by Ala-69, Glu-88, Ala-89, Arg-97, Met-123, Arg-124, Met-354, and Ser-409. Positions 481–520 (LALPQSVRNLPTGLLGAHPSVDESRIGEEQVEYYRNSELR) are excised as a propeptide. The FAD site is built by Glu-645, Trp-653, and Ile-654. Residues 684–701 (RRGAAAATEPMREEALTS) constitute a propeptide that is removed on maturation.

This sequence belongs to the flavin monoamine oxidase family. LGOX subfamily. The LGOX precursor forms homodimers. The mature enzyme is a heterohexamer composed of 2 alpha chains, 2 beta chains and 2 gamma chains (alpha2beta2gamma2). Requires FAD as cofactor. Post-translationally, the precursor form is proteolytically cleaved by an endopeptidase into alpha, beta and gamma chains, which form the stable mature enzyme. Activation by proteolysis occurs after secretion.

Its subcellular location is the secreted. It catalyses the reaction L-glutamate + O2 + H2O = H2O2 + 2-oxoglutarate + NH4(+). With respect to regulation, produced as a single polypeptide precursor and is activated by proteolytic cleavage. The LGOX precursor is an active enzyme, but it exhibits lower catalytic efficiency and lower thermostability compared with the mature hexameric LGOX. The mature form is strongly inhibited by p-chloromercuribenzoate, but not by CuCl(2), EDTA and diethyldithiocarbamate. Functionally, catalyzes the oxidative deamination of L-glutamate to 2-ketoglutarate along with the production of ammonia and hydrogen peroxide. Shows strict substrate specificity for L-glutamate, and exhibits only very weak activity with L-aspartate. This Streptomyces sp protein is L-glutamate oxidase precursor.